Consider the following 460-residue polypeptide: Cysteine--tRNA ligase (460 aa).

Zn(2+) is bound at residue Cys-27. The 'HIGH' region motif lies at 29 to 39; that stretch reads PTVYDLIHVGN. Residues Cys-207, His-232, and Glu-236 each coordinate Zn(2+). The short motif at 264–268 is the 'KMSKS' region element; sequence KMSKS. An ATP-binding site is contributed by Lys-267.

It belongs to the class-I aminoacyl-tRNA synthetase family. As to quaternary structure, monomer. The cofactor is Zn(2+).

The protein resides in the cytoplasm. The catalysed reaction is tRNA(Cys) + L-cysteine + ATP = L-cysteinyl-tRNA(Cys) + AMP + diphosphate. This is Cysteine--tRNA ligase (cysS) from Thermotoga maritima (strain ATCC 43589 / DSM 3109 / JCM 10099 / NBRC 100826 / MSB8).